We begin with the raw amino-acid sequence, 150 residues long: Protein Turandot X1/X2 (150 aa).

The N-terminal stretch at 1 to 22 (MRLYIGSLLICVLLGIVPFATA) is a signal peptide. The tract at residues 127–150 (REEGQSNHANSPTTSPSRIQKMTK) is disordered. Over residues 132–150 (SNHANSPTTSPSRIQKMTK) the composition is skewed to polar residues.

Belongs to the Turandot family.

Its subcellular location is the secreted. Its function is as follows. A humoral factor that may play a role in stress tolerance. The polypeptide is Protein Turandot X1/X2 (Drosophila sechellia (Fruit fly)).